The following is a 187-amino-acid chain: ECF RNA polymerase sigma factor SigK (187 aa).

The interval 30 to 96 is sigma-70 factor domain-2; it reads YDHTCTRVYG…RAVDRVRAEQ (67 aa). Positions 53–56 match the Interaction with polymerase core subunit RpoC motif; the sequence is ETTQ. Residues 133 to 182 are sigma-70 factor domain-4; sequence CLDGLTDTQRQCIELAYYGGLTYAEVSQRLATNLSTIKSRMRDALRGLRN. A DNA-binding region (H-T-H motif) is located at residues 155 to 174; the sequence is YAEVSQRLATNLSTIKSRMR.

This sequence belongs to the sigma-70 factor family. ECF subfamily. Interacts transiently with the RNA polymerase catalytic core formed by RpoA, RpoB, RpoC and RpoZ (2 alpha, 1 beta, 1 beta' and 1 omega subunit) to form the RNA polymerase holoenzyme that can initiate transcription. Interacts (via sigma-70 factor domain 4) with anti-sigma-K factor RskA.

Its function is as follows. Sigma factors are initiation factors that promote the attachment of RNA polymerase to specific initiation sites and are then released. Extracytoplasmic function (ECF) sigma factors are held in an inactive form by an anti-sigma factor until released by regulated intramembrane proteolysis. The protein is ECF RNA polymerase sigma factor SigK (sigK) of Mycobacterium ulcerans (strain Agy99).